A 121-amino-acid polypeptide reads, in one-letter code: C-type natriuretic peptide 4 (121 aa).

The N-terminal stretch at 1–22 is a signal peptide; the sequence is MNLSYLVACGLLVTFLSDKMDA. Positions 23-96 are excised as a propeptide; it reads QPLTPAQQKS…SRRHKSGSKK (74 aa). Positions 80–109 are disordered; that stretch reads LLNDQPASRRHKSGSKKGGSTSRSGCFGHK. A disulfide bridge connects residues Cys105 and Cys121.

This sequence belongs to the natriuretic peptide family. As to expression, brain, spinal cord, spleen, heart and fin, and to a lower extent in gill and ovary.

The protein localises to the secreted. Its function is as follows. Exhibits natriuretic and vasodepressant activity. Has cGMP-stimulating activity. May help to regulate body fluid homeostasis in a variety of aquatic environments. The chain is C-type natriuretic peptide 4 from Oryzias latipes (Japanese rice fish).